The primary structure comprises 1272 residues: MPAERKKPASMEEKDSLPNNKEKDCSERRTVSSKERPKDDIKLTAKKEVSKAPEDKKKRLEDDKRKKEDKERKKKDEEKVKAEEESKKKEEEEKKKHQEEERKKQEEQAKRQQEEEAAAQMKEKEESIQLHQEAWERHHLRKELRSKNQNAPDSRPEENFFSRLDSSLKKNTAFVKKLKTITEQQRDSLSHDFNGLNLSKYIAEAVASIVEAKLKISDVNCAVHLCSLFHQRYADFAPSLLQVWKKHFEARKEEKTPNITKLRTDLRFIAELTIVGIFTDKEGLSLIYEQLKNIINADRESHTHVSVVISFCRHCGDDIAGLVPRKVKSAAEKFNLSFPPSEIISPEKQQPFQNLLKEYFTSLTKHLKRDHRELQNTERQNRRILHSKGELSEDRHKQYEEFAMSYQKLLANSQSLADLLDENMPDLPQDKPTPEEHGPGIDIFTPGKPGEYDLEGGIWEDEDARNFYENLIDLKAFVPAILFKDNEKSCQNKESNKDDTKEAKESKENKEVSSPDDLELELENLEINDDTLELEGGDEAEDLTKKLLDEQEQEDEEASTGSHLKLIVDAFLQQLPNCVNRDLIDKAAMDFCMNMNTKANRKKLVRALFIVPRQRLDLLPFYARLVATLHPCMSDVAEDLCSMLRGDFRFHVRKKDQINIETKNKTVRFIGELTKFKMFTKNDTLHCLKMLLSDFSHHHIEMACTLLETCGRFLFRSPESHLRTSVLLEQMMRKKQAMHLDARYVTMVENAYYYCNPPPAEKTVKKKRPPLQEYVRKLLYKDLSKVTTEKVLRQMRKLPWQDQEVKDYVICCMINIWNVKYNSIHCVANLLAGLVLYQEDVGIHVVDGVLEDIRLGMEVNQPKFNQRRISSAKFLGELYNYRMVESAVIFRTLYSFTSFGVNPDGSPSSLDPPEHLFRIRLVCTILDTCGQYFDRGSSKRKLDCFLVYFQRYVWWKKSLEVWTKDHPFPIDIDYMISDTLELLRPKIKLCNSLEESIRQVQDLEREFLIKLGLVNDKDSKDSMTEGENLEEDEEEEEGGAETEEQSGNESEVNEPEEEEGSDNDDDEGEEEEEENTDYLTDSNKENETDEENTEVMIKGGGLKHVPCVEDEDFIQALDKMMLENLQQRSGESVKVHQLDVAIPLHLKSQLRKGPPLGGGEGEAESADTMPFVMLTRKGNKQQFKILNVPMSSQLAANHWNQQQAEQEERMRMKKLTLDINERQEQEDYQEMLQSLAQRPAPANTNRERRPRYQHPKGAPNADLIFKTGGRRR.

Residues 1–114 (MPAERKKPAS…QEEQAKRQQE (114 aa)) show a composition bias toward basic and acidic residues. Disordered regions lie at residues 1-126 (MPAE…EKEE), 370-389 (DHRE…HSKG), 423-445 (NMPD…DIFT), and 490-517 (CQNK…SPDD). Residues 54–134 (EDKKKRLEDD…EESIQLHQEA (81 aa)) are a coiled coil. Positions 94–133 (KKKHQEEERKKQEEQAKRQQEEEAAAQMKEKEESIQLHQE) are sufficient for interaction with UPF1. The region spanning 168 to 431 (LKKNTAFVKK…ENMPDLPQDK (264 aa)) is the MIF4G 1 domain. Composition is skewed to basic and acidic residues over residues 428-439 (PQDKPTPEEHGP) and 490-513 (CQNK…KEVS). Residues 487–559 (EKSCQNKESN…EQEQEDEEAS (73 aa)) are a coiled coil. MIF4G domains lie at 569-758 (DAFL…CNPP) and 773-986 (EYVR…LRPK). Residues 711 to 928 (GRFLFRSPES…IRLVCTILDT (218 aa)) are sufficient for interaction with UPF3A and UPF3B. The sufficient for interaction with EIF4A1 and EIF1 stretch occupies residues 757–1272 (PPPAEKTVKK…LIFKTGGRRR (516 aa)). A binds to UPF3B region spans residues 839–859 (EDVGIHVVDGVLEDIRLGMEV). The disordered stretch occupies residues 1018–1098 (DSKDSMTEGE…DEENTEVMIK (81 aa)). Residues 1027–1076 (ENLEEDEEEEEGGAETEEQSGNESEVNEPEEEEGSDNDDDEGEEEEEENT) show a composition bias toward acidic residues. The segment at 1084 to 1272 (KENETDEENT…LIFKTGGRRR (189 aa)) is sufficient for interaction with UPF1 C-terminus. Threonine 1088 carries the post-translational modification Phosphothreonine. Interaction with UPF1 stretches follow at residues 1105–1129 (VPCV…QQRS) and 1167–1207 (DTMP…AEQE). Residues 1105 to 1198 (VPCVEDEDFI…PMSSQLAANH (94 aa)) are necessary for interaction with UPF1. Positions 1220–1272 (NERQEQEDYQEMLQSLAQRPAPANTNRERRPRYQHPKGAPNADLIFKTGGRRR) are disordered.

In terms of assembly, found in a post-splicing messenger ribonucleoprotein (mRNP) complex. Associates with the exon junction complex (EJC). Interacts with SMG1, EST1A, UPF1, UPF3A, UPF3B, EIF4A1 and EIF1. In terms of tissue distribution, ubiquitous.

The protein localises to the cytoplasm. It is found in the perinuclear region. Functionally, involved in nonsense-mediated decay (NMD) of mRNAs containing premature stop codons by associating with the nuclear exon junction complex (EJC). Recruited by UPF3B associated with the EJC core at the cytoplasmic side of the nuclear envelope and the subsequent formation of an UPF1-UPF2-UPF3 surveillance complex (including UPF1 bound to release factors at the stalled ribosome) is believed to activate NMD. In cooperation with UPF3B stimulates both ATPase and RNA helicase activities of UPF1. Binds spliced mRNA. The chain is Regulator of nonsense transcripts 2 from Homo sapiens (Human).